The sequence spans 86 residues: Cell division protein ZapA (86 aa).

The protein belongs to the ZapA family. Type 2 subfamily. As to quaternary structure, homodimer. Interacts with FtsZ.

It localises to the cytoplasm. In terms of biological role, activator of cell division through the inhibition of FtsZ GTPase activity, therefore promoting FtsZ assembly into bundles of protofilaments necessary for the formation of the division Z ring. It is recruited early at mid-cell but it is not essential for cell division. In Oceanobacillus iheyensis (strain DSM 14371 / CIP 107618 / JCM 11309 / KCTC 3954 / HTE831), this protein is Cell division protein ZapA.